We begin with the raw amino-acid sequence, 244 residues long: tRNA pseudouridine synthase A (244 aa).

Aspartate 53 serves as the catalytic Nucleophile. Residue tyrosine 111 coordinates substrate.

This sequence belongs to the tRNA pseudouridine synthase TruA family. As to quaternary structure, homodimer.

It catalyses the reaction uridine(38/39/40) in tRNA = pseudouridine(38/39/40) in tRNA. Functionally, formation of pseudouridine at positions 38, 39 and 40 in the anticodon stem and loop of transfer RNAs. The protein is tRNA pseudouridine synthase A of Bacillus sp. (strain KSM-64).